Consider the following 356-residue polypeptide: uncharacterized protein (356 aa).

The protein belongs to the NAD(P)-dependent epimerase/dehydratase family. NAD(+) serves as cofactor. It depends on NADP(+) as a cofactor.

Functionally, putative nucleotide sugar epimerase/dehydrogenase. This is an uncharacterized protein from Sinorhizobium fredii (strain NBRC 101917 / NGR234).